A 254-amino-acid chain; its full sequence is Imidazole glycerol phosphate synthase subunit HisF (254 aa).

Active-site residues include aspartate 12 and aspartate 131.

The protein belongs to the HisA/HisF family. As to quaternary structure, heterodimer of HisH and HisF.

The protein localises to the cytoplasm. The enzyme catalyses 5-[(5-phospho-1-deoxy-D-ribulos-1-ylimino)methylamino]-1-(5-phospho-beta-D-ribosyl)imidazole-4-carboxamide + L-glutamine = D-erythro-1-(imidazol-4-yl)glycerol 3-phosphate + 5-amino-1-(5-phospho-beta-D-ribosyl)imidazole-4-carboxamide + L-glutamate + H(+). Its pathway is amino-acid biosynthesis; L-histidine biosynthesis; L-histidine from 5-phospho-alpha-D-ribose 1-diphosphate: step 5/9. Functionally, IGPS catalyzes the conversion of PRFAR and glutamine to IGP, AICAR and glutamate. The HisF subunit catalyzes the cyclization activity that produces IGP and AICAR from PRFAR using the ammonia provided by the HisH subunit. The sequence is that of Imidazole glycerol phosphate synthase subunit HisF from Leifsonia xyli subsp. xyli (strain CTCB07).